Here is a 491-residue protein sequence, read N- to C-terminus: MSIDLNWEAATSGPDGEQLAERIRSFIHDKFQQVPLPRFIRSVNVHSFEFGSIAPELEIKDICDPFVDFYEESDSSEDEDGEGHDAESDTSSDRAADSTADKRDMRYGHDDRGNNGHIPNHHDHLRTSQWVAGGTDGHSTQSPLRSPIGLGDHLNAHFRSTTPNILPGVTSNLGYHLMMGNLSGTQTPLAAVAGGTPFGPGWPDAVMNQGSRMTDHTTGRTRREDHNKNETGSPSRPSTAHTNPTQLSHGRSAASSSNNTSNDPTVIYNDHTSSTTATTYGLHEGGDRPRDKHGHRIDQEEPPPSPTPHMRERRPEDFQVICRVKYAGDVKLSLTAEILLDYPMPSFVGLPLKLNITGITFDGVAVVAYIRRRAHLCFLSPEDADALLGDEDDIQHPSYSTANTTTAASGSSTDNNNNNNESNDHPNHPPQPRRRFGSLLQQIRVDSEIGRKENGKQALKNVGKVERFVLDQVRRIFEDEFVFPSYWTFLV.

In terms of domain architecture, SMP-LTD spans 1–491; sequence MSIDLNWEAA…VFPSYWTFLV (491 aa). Residues 72–82 show a composition bias toward acidic residues; sequence ESDSSEDEDGE. Disordered regions lie at residues 72–123, 201–313, and 389–434; these read ESDS…NHHD, GWPD…MRER, and GDED…QPRR. Basic and acidic residues-rich tracts occupy residues 83–123 and 213–229; these read GHDA…NHHD and MTDHTTGRTRREDHNKN. Residues 230–249 are compositionally biased toward polar residues; that stretch reads ETGSPSRPSTAHTNPTQLSH. Over residues 252-262 the composition is skewed to low complexity; it reads SAASSSNNTSN. Positions 270-279 are enriched in polar residues; the sequence is DHTSSTTATT. The segment covering 400–421 has biased composition (low complexity); it reads STANTTTAASGSSTDNNNNNNE.

This sequence belongs to the MDM12 family. As to quaternary structure, component of the ER-mitochondria encounter structure (ERMES) or MDM complex, composed of mmm1, mdm10, mdm12 and mdm34. A mmm1 homodimer associates with one molecule of mdm12 on each side in a pairwise head-to-tail manner, and the SMP-LTD domains of mmm1 and mdm12 generate a continuous hydrophobic tunnel for phospholipid trafficking.

The protein localises to the mitochondrion outer membrane. It localises to the endoplasmic reticulum membrane. In terms of biological role, component of the ERMES/MDM complex, which serves as a molecular tether to connect the endoplasmic reticulum (ER) and mitochondria. Components of this complex are involved in the control of mitochondrial shape and protein biogenesis, and function in nonvesicular lipid trafficking between the ER and mitochondria. Mdm12 is required for the interaction of the ER-resident membrane protein mmm1 and the outer mitochondrial membrane-resident beta-barrel protein mdm10. The mdm12-mmm1 subcomplex functions in the major beta-barrel assembly pathway that is responsible for biogenesis of all mitochondrial outer membrane beta-barrel proteins, and acts in a late step after the SAM complex. The mdm10-mdm12-mmm1 subcomplex further acts in the TOM40-specific pathway after the action of the mdm12-mmm1 complex. Essential for establishing and maintaining the structure of mitochondria and maintenance of mtDNA nucleoids. In Talaromyces stipitatus (strain ATCC 10500 / CBS 375.48 / QM 6759 / NRRL 1006) (Penicillium stipitatum), this protein is Mitochondrial distribution and morphology protein 12.